We begin with the raw amino-acid sequence, 226 residues long: Putative N-acetylmannosamine-6-phosphate 2-epimerase 1 (226 aa).

It belongs to the NanE family.

It carries out the reaction an N-acyl-D-glucosamine 6-phosphate = an N-acyl-D-mannosamine 6-phosphate. Its pathway is amino-sugar metabolism; N-acetylneuraminate degradation; D-fructose 6-phosphate from N-acetylneuraminate: step 3/5. In terms of biological role, converts N-acetylmannosamine-6-phosphate (ManNAc-6-P) to N-acetylglucosamine-6-phosphate (GlcNAc-6-P). The sequence is that of Putative N-acetylmannosamine-6-phosphate 2-epimerase 1 (nanE1) from Salmonella typhimurium (strain LT2 / SGSC1412 / ATCC 700720).